We begin with the raw amino-acid sequence, 366 residues long: tRNA pseudouridine synthase B (366 aa).

A disordered region spans residues 1-55 (MTVTTPDALLAPHDVQHAGADESAAQIRKPRDNNDPRNANRGGGNGKPRRDKRDV). Asp92 serves as the catalytic Nucleophile.

It belongs to the pseudouridine synthase TruB family. Type 1 subfamily.

It catalyses the reaction uridine(55) in tRNA = pseudouridine(55) in tRNA. In terms of biological role, responsible for synthesis of pseudouridine from uracil-55 in the psi GC loop of transfer RNAs. The sequence is that of tRNA pseudouridine synthase B from Rhodopseudomonas palustris (strain ATCC BAA-98 / CGA009).